Here is a 544-residue protein sequence, read N- to C-terminus: Chaperonin GroEL (544 aa).

Residues 29 to 32, 86 to 90, glycine 413, 476 to 478, and aspartate 492 contribute to the ATP site; these read TLGP, DGTTT, and NAA.

This sequence belongs to the chaperonin (HSP60) family. As to quaternary structure, forms a cylinder of 14 subunits composed of two heptameric rings stacked back-to-back. Interacts with the co-chaperonin GroES.

Its subcellular location is the cytoplasm. It catalyses the reaction ATP + H2O + a folded polypeptide = ADP + phosphate + an unfolded polypeptide.. Together with its co-chaperonin GroES, plays an essential role in assisting protein folding. The GroEL-GroES system forms a nano-cage that allows encapsulation of the non-native substrate proteins and provides a physical environment optimized to promote and accelerate protein folding. In Bacillus pumilus (strain SAFR-032), this protein is Chaperonin GroEL.